Consider the following 208-residue polypeptide: N-(5'-phosphoribosyl)anthranilate isomerase (208 aa).

Belongs to the TrpF family.

It catalyses the reaction N-(5-phospho-beta-D-ribosyl)anthranilate = 1-(2-carboxyphenylamino)-1-deoxy-D-ribulose 5-phosphate. It participates in amino-acid biosynthesis; L-tryptophan biosynthesis; L-tryptophan from chorismate: step 3/5. This Neisseria meningitidis serogroup C / serotype 2a (strain ATCC 700532 / DSM 15464 / FAM18) protein is N-(5'-phosphoribosyl)anthranilate isomerase.